We begin with the raw amino-acid sequence, 527 residues long: Peptide chain release factor 3 (527 aa).

The region spanning 9-278 (NKRRTFAIIS…GLTQWAPKPQ (270 aa)) is the tr-type G domain. Residues 18–25 (SHPDAGKT), 86–90 (DTPGH), and 140–143 (NKLD) contribute to the GTP site.

Belongs to the TRAFAC class translation factor GTPase superfamily. Classic translation factor GTPase family. PrfC subfamily.

The protein localises to the cytoplasm. Increases the formation of ribosomal termination complexes and stimulates activities of RF-1 and RF-2. It binds guanine nucleotides and has strong preference for UGA stop codons. It may interact directly with the ribosome. The stimulation of RF-1 and RF-2 is significantly reduced by GTP and GDP, but not by GMP. This Haemophilus influenzae (strain PittEE) protein is Peptide chain release factor 3.